The following is a 95-amino-acid chain: Glutamyl-tRNA(Gln) amidotransferase subunit C (95 aa).

Belongs to the GatC family. Heterotrimer of A, B and C subunits.

The catalysed reaction is L-glutamyl-tRNA(Gln) + L-glutamine + ATP + H2O = L-glutaminyl-tRNA(Gln) + L-glutamate + ADP + phosphate + H(+). It carries out the reaction L-aspartyl-tRNA(Asn) + L-glutamine + ATP + H2O = L-asparaginyl-tRNA(Asn) + L-glutamate + ADP + phosphate + 2 H(+). Its function is as follows. Allows the formation of correctly charged Asn-tRNA(Asn) or Gln-tRNA(Gln) through the transamidation of misacylated Asp-tRNA(Asn) or Glu-tRNA(Gln) in organisms which lack either or both of asparaginyl-tRNA or glutaminyl-tRNA synthetases. The reaction takes place in the presence of glutamine and ATP through an activated phospho-Asp-tRNA(Asn) or phospho-Glu-tRNA(Gln). This is Glutamyl-tRNA(Gln) amidotransferase subunit C from Rhizobium meliloti (strain 1021) (Ensifer meliloti).